Here is a 603-residue protein sequence, read N- to C-terminus: Sulfite reductase [NADPH] flavoprotein alpha-component (603 aa).

One can recognise a Flavodoxin-like domain in the interval isoleucine 64–valine 202. FMN is bound by residues serine 70–alanine 75, serine 117–glycine 120, and leucine 153–alanine 162. Residues glutamate 236–proline 452 enclose the FAD-binding FR-type domain. FAD contacts are provided by residues threonine 326, leucine 360, arginine 390–serine 393, threonine 408–glycine 410, tyrosine 414, and glycine 423–serine 426. NADP(+) is bound by residues serine 523–arginine 524, lysine 529–glutamine 533, and aspartate 565. Tyrosine 603 contacts FAD.

The protein belongs to the NADPH-dependent sulphite reductase flavoprotein subunit CysJ family. It in the N-terminal section; belongs to the flavodoxin family. In the C-terminal section; belongs to the flavoprotein pyridine nucleotide cytochrome reductase family. Alpha(8)-beta(8). The alpha component is a flavoprotein, the beta component is a hemoprotein. It depends on FAD as a cofactor. FMN is required as a cofactor.

The enzyme catalyses hydrogen sulfide + 3 NADP(+) + 3 H2O = sulfite + 3 NADPH + 4 H(+). It participates in sulfur metabolism; hydrogen sulfide biosynthesis; hydrogen sulfide from sulfite (NADPH route): step 1/1. Component of the sulfite reductase complex that catalyzes the 6-electron reduction of sulfite to sulfide. This is one of several activities required for the biosynthesis of L-cysteine from sulfate. The flavoprotein component catalyzes the electron flow from NADPH -&gt; FAD -&gt; FMN to the hemoprotein component. The sequence is that of Sulfite reductase [NADPH] flavoprotein alpha-component from Sodalis glossinidius (strain morsitans).